The chain runs to 580 residues: Arginine--tRNA ligase (580 aa).

Positions 131 to 141 match the 'HIGH' region motif; that stretch reads ANPTGPMHVGH.

Belongs to the class-I aminoacyl-tRNA synthetase family. Monomer.

The protein localises to the cytoplasm. The enzyme catalyses tRNA(Arg) + L-arginine + ATP = L-arginyl-tRNA(Arg) + AMP + diphosphate. The sequence is that of Arginine--tRNA ligase from Cereibacter sphaeroides (strain KD131 / KCTC 12085) (Rhodobacter sphaeroides).